We begin with the raw amino-acid sequence, 569 residues long: 3-oxosteroid 1-dehydrogenase (569 aa).

10-39 (DVVVVGSGAAGMVAALTAAHQGLSTVVVEK) is an FAD binding site. The segment at 127–148 (PGGKPTGRSVEPKPFDANKLGP) is disordered.

The protein belongs to the FAD-dependent oxidoreductase 2 family. 3-oxosteroid dehydrogenase subfamily. Requires FAD as cofactor.

The catalysed reaction is a 3-oxosteroid + A = a 3-oxo-Delta(1)-steroid + AH2. It carries out the reaction a 3-oxo-Delta(4)-steroid + A = a 3-oxo-Delta(1,4)-steroid + AH2. In terms of biological role, catalyzes the elimination of the C-1 and C-2 hydrogen atoms of the A-ring from the polycyclic ring structure of 3-ketosteroids. Is also involved in the formation of 1,4-androstadiene-3,17-dione (ADD) from 4-androstene-3,17-dione (AD) to. This chain is 3-oxosteroid 1-dehydrogenase (ksdD), found in Mycolicibacterium smegmatis (strain ATCC 700084 / mc(2)155) (Mycobacterium smegmatis).